We begin with the raw amino-acid sequence, 863 residues long: Cilia- and flagella-associated protein 58 (863 aa).

Coiled coils occupy residues T107–D600 and Q631–F815. Residues G836 to S863 are disordered. Positions G845–S863 are enriched in gly residues.

The protein belongs to the CFAP58 family.

The protein resides in the cell projection. It is found in the cilium. Its subcellular location is the flagellum. This is Cilia- and flagella-associated protein 58 from Chlamydomonas reinhardtii (Chlamydomonas smithii).